The following is a 120-amino-acid chain: Chaperonin GroEL (120 aa).

23–27 is a binding site for ATP; sequence DGTTT.

This sequence belongs to the chaperonin (HSP60) family. In terms of assembly, forms a cylinder of 14 subunits composed of two heptameric rings stacked back-to-back. Interacts with the co-chaperonin GroES.

Its subcellular location is the cytoplasm. The enzyme catalyses ATP + H2O + a folded polypeptide = ADP + phosphate + an unfolded polypeptide.. Functionally, together with its co-chaperonin GroES, plays an essential role in assisting protein folding. The GroEL-GroES system forms a nano-cage that allows encapsulation of the non-native substrate proteins and provides a physical environment optimized to promote and accelerate protein folding. The polypeptide is Chaperonin GroEL (Mycolicibacter nonchromogenicus (Mycobacterium nonchromogenicum)).